The following is a 246-amino-acid chain: Putative carbonic anhydrase 3 (246 aa).

In terms of domain architecture, Alpha-carbonic anhydrase spans 3 to 244 (GHWSYCDDDE…LNDRKIVHIV (242 aa)). His61 acts as the Proton acceptor in catalysis. Residues His91, His93, and His116 each coordinate Zn(2+). Residue 187-188 (TT) coordinates substrate.

Belongs to the alpha-carbonic anhydrase family. It depends on Zn(2+) as a cofactor.

The enzyme catalyses hydrogencarbonate + H(+) = CO2 + H2O. Its function is as follows. Reversible hydration of carbon dioxide. In Caenorhabditis elegans, this protein is Putative carbonic anhydrase 3 (cah-3).